A 363-amino-acid polypeptide reads, in one-letter code: Peptide chain release factor 2 (363 aa).

An N5-methylglutamine modification is found at glutamine 251.

Belongs to the prokaryotic/mitochondrial release factor family. Methylated by PrmC. Methylation increases the termination efficiency of RF2.

It localises to the cytoplasm. Peptide chain release factor 2 directs the termination of translation in response to the peptide chain termination codons UGA and UAA. The chain is Peptide chain release factor 2 (prfB) from Helicobacter pylori (strain J99 / ATCC 700824) (Campylobacter pylori J99).